The chain runs to 103 residues: Histone H4 (103 aa).

The span at 1 to 14 shows a compositional bias: gly residues; that stretch reads MSGRGKGGKGLGKG. Residues 1 to 20 form a disordered region; the sequence is MSGRGKGGKGLGKGGAKRHR. A DNA-binding region spans residues 17–21; the sequence is KRHRK.

The protein belongs to the histone H4 family. As to quaternary structure, the nucleosome is a histone octamer containing two molecules each of H2A, H2B, H3 and H4 assembled in one H3-H4 heterotetramer and two H2A-H2B heterodimers. The octamer wraps approximately 147 bp of DNA.

It is found in the nucleus. It localises to the chromosome. In terms of biological role, core component of nucleosome. Nucleosomes wrap and compact DNA into chromatin, limiting DNA accessibility to the cellular machineries which require DNA as a template. Histones thereby play a central role in transcription regulation, DNA repair, DNA replication and chromosomal stability. DNA accessibility is regulated via a complex set of post-translational modifications of histones, also called histone code, and nucleosome remodeling. This Chlamydomonas reinhardtii (Chlamydomonas smithii) protein is Histone H4 (H4-I).